The following is a 763-amino-acid chain: Phosphoglycerol transferase I (763 aa).

Transmembrane regions (helical) follow at residues 1-21 (MSEL…AWKA), 26-46 (WWFA…ITLY), 77-97 (ILPG…LGWI), and 108-128 (VGYS…SPAF).

It belongs to the OpgB family.

The protein resides in the cell inner membrane. It catalyses the reaction a phosphatidylglycerol + a membrane-derived-oligosaccharide D-glucose = a 1,2-diacyl-sn-glycerol + a membrane-derived-oligosaccharide 6-(glycerophospho)-D-glucose.. Its pathway is glycan metabolism; osmoregulated periplasmic glucan (OPG) biosynthesis. In terms of biological role, transfers a phosphoglycerol residue from phosphatidylglycerol to the membrane-bound nascent glucan backbones. In Salmonella newport (strain SL254), this protein is Phosphoglycerol transferase I.